Consider the following 178-residue polypeptide: MAELTTLARPYAKAAFEHAQAHQQLANWSAMLGLAAAVSQDDTMQRVLKAPRLTSAEKAATFIDVCGDKFDAKAQNFINVVAENDRLPLLPEIAALFDLYKAEQEKSVDVEVTSAFALNQEQQDKLAKVLSARLNREVRLQVEEDSSLIGGVVIRAGDLVIDGSIRGKIAKLAEALKS.

It belongs to the ATPase delta chain family. In terms of assembly, F-type ATPases have 2 components, F(1) - the catalytic core - and F(0) - the membrane proton channel. F(1) has five subunits: alpha(3), beta(3), gamma(1), delta(1), epsilon(1). F(0) has three main subunits: a(1), b(2) and c(10-14). The alpha and beta chains form an alternating ring which encloses part of the gamma chain. F(1) is attached to F(0) by a central stalk formed by the gamma and epsilon chains, while a peripheral stalk is formed by the delta and b chains.

It is found in the cell inner membrane. F(1)F(0) ATP synthase produces ATP from ADP in the presence of a proton or sodium gradient. F-type ATPases consist of two structural domains, F(1) containing the extramembraneous catalytic core and F(0) containing the membrane proton channel, linked together by a central stalk and a peripheral stalk. During catalysis, ATP synthesis in the catalytic domain of F(1) is coupled via a rotary mechanism of the central stalk subunits to proton translocation. Functionally, this protein is part of the stalk that links CF(0) to CF(1). It either transmits conformational changes from CF(0) to CF(1) or is implicated in proton conduction. In Pseudomonas fluorescens (strain Pf0-1), this protein is ATP synthase subunit delta.